The primary structure comprises 457 residues: tRNA modification GTPase MnmE (457 aa).

(6S)-5-formyl-5,6,7,8-tetrahydrofolate-binding residues include arginine 23, glutamate 85, and arginine 124. Positions 220 to 376 (GALVVLAGQV…LVTAIRAAVL (157 aa)) constitute a TrmE-type G domain. Asparagine 230 contributes to the K(+) binding site. GTP contacts are provided by residues 230–235 (NAGKSS), 249–255 (TDLPGTT), and 274–277 (DTAG). Serine 234 is a Mg(2+) binding site. K(+) contacts are provided by threonine 249, leucine 251, and threonine 254. Residue threonine 255 coordinates Mg(2+). Lysine 457 is a (6S)-5-formyl-5,6,7,8-tetrahydrofolate binding site.

Belongs to the TRAFAC class TrmE-Era-EngA-EngB-Septin-like GTPase superfamily. TrmE GTPase family. In terms of assembly, homodimer. Heterotetramer of two MnmE and two MnmG subunits. K(+) is required as a cofactor.

Its subcellular location is the cytoplasm. Functionally, exhibits a very high intrinsic GTPase hydrolysis rate. Involved in the addition of a carboxymethylaminomethyl (cmnm) group at the wobble position (U34) of certain tRNAs, forming tRNA-cmnm(5)s(2)U34. The protein is tRNA modification GTPase MnmE of Nitratidesulfovibrio vulgaris (strain ATCC 29579 / DSM 644 / CCUG 34227 / NCIMB 8303 / VKM B-1760 / Hildenborough) (Desulfovibrio vulgaris).